The following is a 483-amino-acid chain: Membrane-bound lytic murein transglycosylase F (483 aa).

The N-terminal stretch at 1-18 is a signal peptide; it reads MKGLIARFIAGFALLLWA. Residues 19–267 form a non-LT domain region; it reads WDMVFPWQQL…RIEEKYFNHL (249 aa). The LT domain stretch occupies residues 269-483; it reads HFDYVDIQSY…SKESDSTLKE (215 aa). Residue E312 is part of the active site. The interval 459-483 is disordered; that stretch reads QIQNNEEQSSVPQEISKESDSTLKE. A compositionally biased stretch (basic and acidic residues) spans 473-483; it reads ISKESDSTLKE.

The protein in the N-terminal section; belongs to the bacterial solute-binding protein 3 family. This sequence in the C-terminal section; belongs to the transglycosylase Slt family.

It localises to the cell outer membrane. The catalysed reaction is Exolytic cleavage of the (1-&gt;4)-beta-glycosidic linkage between N-acetylmuramic acid (MurNAc) and N-acetylglucosamine (GlcNAc) residues in peptidoglycan, from either the reducing or the non-reducing ends of the peptidoglycan chains, with concomitant formation of a 1,6-anhydrobond in the MurNAc residue.. Functionally, murein-degrading enzyme that degrades murein glycan strands and insoluble, high-molecular weight murein sacculi, with the concomitant formation of a 1,6-anhydromuramoyl product. Lytic transglycosylases (LTs) play an integral role in the metabolism of the peptidoglycan (PG) sacculus. Their lytic action creates space within the PG sacculus to allow for its expansion as well as for the insertion of various structures such as secretion systems and flagella. In Actinobacillus pleuropneumoniae serotype 7 (strain AP76), this protein is Membrane-bound lytic murein transglycosylase F.